We begin with the raw amino-acid sequence, 146 residues long: uncharacterized protein (146 aa).

This is an uncharacterized protein from Acanthamoeba polyphaga mimivirus (APMV).